The chain runs to 159 residues: Probable GPI-anchored protein ANS1 (159 aa).

An N-terminal signal peptide occupies residues 1-20 (MKCTLVSTLFAITNILVAHA). One copy of the PIR1/2/3 repeat lies at 101-114 (AAISQISDGQIQAT). The GPI-anchor amidated glycine moiety is linked to residue glycine 137. Residues 138–159 (AGMKVESKNMGYIVGVAALLFL) constitute a propeptide, removed in mature form.

It is found in the cell membrane. The sequence is that of Probable GPI-anchored protein ANS1 (ANS1) from Saccharomyces cerevisiae (strain ATCC 204508 / S288c) (Baker's yeast).